The following is a 211-amino-acid chain: LexA repressor (211 aa).

Positions 35–55 (RAEIANFFGFKSANAAEEHLK) form a DNA-binding region, H-T-H motif. Active-site for autocatalytic cleavage activity residues include S128 and K165.

It belongs to the peptidase S24 family. As to quaternary structure, homodimer.

It catalyses the reaction Hydrolysis of Ala-|-Gly bond in repressor LexA.. Functionally, represses a number of genes involved in the response to DNA damage (SOS response), including recA and lexA. In the presence of single-stranded DNA, RecA interacts with LexA causing an autocatalytic cleavage which disrupts the DNA-binding part of LexA, leading to derepression of the SOS regulon and eventually DNA repair. The sequence is that of LexA repressor from Colwellia psychrerythraea (strain 34H / ATCC BAA-681) (Vibrio psychroerythus).